A 152-amino-acid polypeptide reads, in one-letter code: Large-conductance mechanosensitive channel (152 aa).

2 helical membrane passes run 14 to 34 (VIDL…VKSL) and 84 to 104 (VGQF…VFLL).

The protein belongs to the MscL family. In terms of assembly, homopentamer.

The protein resides in the cell inner membrane. Channel that opens in response to stretch forces in the membrane lipid bilayer. May participate in the regulation of osmotic pressure changes within the cell. The polypeptide is Large-conductance mechanosensitive channel (Laribacter hongkongensis (strain HLHK9)).